We begin with the raw amino-acid sequence, 89 residues long: Dynein light chain 1, cytoplasmic (89 aa).

It belongs to the dynein light chain family. In terms of assembly, interacts with spn-F. Forms ternary complexes with spn-F and IKKepsilon. As to expression, ubiquitous.

The protein resides in the cytoplasm. It localises to the cytoskeleton. Functionally, acts as a non-catalytic accessory component of a dynein complex. The sequence is that of Dynein light chain 1, cytoplasmic (ctp) from Drosophila melanogaster (Fruit fly).